Reading from the N-terminus, the 316-residue chain is ATP synthase gamma chain (316 aa).

The protein belongs to the ATPase gamma chain family. F-type ATPases have 2 components, CF(1) - the catalytic core - and CF(0) - the membrane proton channel. CF(1) has five subunits: alpha(3), beta(3), gamma(1), delta(1), epsilon(1). CF(0) has three main subunits: a, b and c.

It localises to the cellular thylakoid membrane. Its function is as follows. Produces ATP from ADP in the presence of a proton gradient across the membrane. The gamma chain is believed to be important in regulating ATPase activity and the flow of protons through the CF(0) complex. The protein is ATP synthase gamma chain of Synechococcus sp. (strain CC9605).